Here is a 105-residue protein sequence, read N- to C-terminus: UPF0235 protein RP839 (105 aa).

The protein belongs to the UPF0235 family.

The chain is UPF0235 protein RP839 from Rickettsia prowazekii (strain Madrid E).